We begin with the raw amino-acid sequence, 1387 residues long: Magnesium-chelatase subunit ChlH, chloroplastic (1387 aa).

A chloroplast-targeting transit peptide spans 1-50 (MSSLVSTPFTTATGVQKKLGAPVPLHSFLLSRRQPAAGAGRGRAAAAAIR).

This sequence belongs to the Mg-chelatase subunit H family. As to quaternary structure, the magnesium chelatase complex is a heterotrimer consisting of subunits CHLI, CHLD and CHLH.

The protein localises to the plastid. It localises to the chloroplast stroma. Its subcellular location is the chloroplast membrane. It carries out the reaction protoporphyrin IX + Mg(2+) + ATP + H2O = Mg-protoporphyrin IX + ADP + phosphate + 3 H(+). It participates in porphyrin-containing compound metabolism; chlorophyll biosynthesis. Functionally, involved in chlorophyll biosynthesis. Catalyzes the insertion of magnesium ion into protoporphyrin IX to yield Mg-protoporphyrin IX. The reaction takes place in two steps, with an ATP-dependent activation followed by an ATP-dependent chelation step. May be involved in the plastid-to-nucleus retrograde signaling. The sequence is that of Magnesium-chelatase subunit ChlH, chloroplastic (CHLH) from Oryza sativa subsp. indica (Rice).